Consider the following 39-residue polypeptide: Photosystem II reaction center protein L (39 aa).

A helical transmembrane segment spans residues 18–38 (SLYLGVLSVLVLGILFSSYFF).

Belongs to the PsbL family. PSII is composed of 1 copy each of membrane proteins PsbA, PsbB, PsbC, PsbD, PsbE, PsbF, PsbH, PsbI, PsbJ, PsbK, PsbL, PsbM, PsbT, PsbX, PsbY, Psb30/Ycf12, peripheral proteins PsbO, CyanoQ (PsbQ), PsbU, PsbV and a large number of cofactors. It forms dimeric complexes.

Its subcellular location is the cellular thylakoid membrane. One of the components of the core complex of photosystem II (PSII). PSII is a light-driven water:plastoquinone oxidoreductase that uses light energy to abstract electrons from H(2)O, generating O(2) and a proton gradient subsequently used for ATP formation. It consists of a core antenna complex that captures photons, and an electron transfer chain that converts photonic excitation into a charge separation. This subunit is found at the monomer-monomer interface and is required for correct PSII assembly and/or dimerization. The chain is Photosystem II reaction center protein L from Prochlorococcus marinus (strain MIT 9515).